The following is a 397-amino-acid chain: Phosphoglycerate kinase (397 aa).

Residues D21 to N23, R37, H60 to R63, R119, and R152 contribute to the substrate site. Residues K203, G294, E325, and G354–S357 contribute to the ATP site.

This sequence belongs to the phosphoglycerate kinase family. Monomer.

The protein resides in the cytoplasm. It carries out the reaction (2R)-3-phosphoglycerate + ATP = (2R)-3-phospho-glyceroyl phosphate + ADP. Its pathway is carbohydrate degradation; glycolysis; pyruvate from D-glyceraldehyde 3-phosphate: step 2/5. This Chlorobium phaeobacteroides (strain BS1) protein is Phosphoglycerate kinase.